The chain runs to 1466 residues: Adhesion G protein-coupled receptor L1 (1466 aa).

A signal peptide spans 1-28 (MARLAAALWSLCVTTVLVTSATQGLSRA). Topologically, residues 29–852 (GLPFGLMRRE…EIYQGRINEL (824 aa)) are extracellular. The SUEL-type lectin domain maps to 40-129 (ACEGYPIELR…KYLEVQYDCV (90 aa)). Cystine bridges form between cysteine 41–cysteine 71, cysteine 50–cysteine 128, cysteine 83–cysteine 115, cysteine 96–cysteine 102, and cysteine 135–cysteine 317. Residue glutamate 42 participates in alpha-L-rhamnose binding. Asparagine 98 is a glycosylation site (N-linked (GlcNAc...) asparagine). An alpha-L-rhamnose-binding site is contributed by 117 to 120 (GTYK). The region spanning 134–393 (VCPGTLQKVL…VVRYSLEFGP (260 aa)) is the Olfactomedin-like domain. The interval 395 to 463 (DPSAGPATSP…APAPSTRRPP (69 aa)) is disordered. The span at 400–436 (PATSPPLSTTTTARPTPLTSTASPAATTPLRRAPLTT) shows a compositional bias: low complexity. The span at 448-463 (DLPPATAPAPSTRRPP) shows a compositional bias: pro residues. Disulfide bonds link cysteine 475–cysteine 510 and cysteine 498–cysteine 527. 6 N-linked (GlcNAc...) asparagine glycosylation sites follow: asparagine 526, asparagine 635, asparagine 736, asparagine 795, asparagine 800, and asparagine 821. One can recognise a GAIN-B domain in the interval 664–845 (PARFLAAKQN…AVLMAHREIY (182 aa)). 2 disulfides stabilise this stretch: cysteine 796–cysteine 827 and cysteine 815–cysteine 829. The segment at 796–845 (CSFWNYSERSMLGYWSTQGCRLVESNKTHTTCACSHLTNFAVLMAHREIY) is GPS. Residues 853–873 (LLSVITWVGIVISLVCLAICI) traverse the membrane as a helical segment. The Cytoplasmic segment spans residues 874–887 (STFCFLRGLQTDRN). Residues 888 to 908 (TIHKNLCINLFLAELLFLVGI) traverse the membrane as a helical segment. Residues 909 to 914 (DKTQYE) are Extracellular-facing. A helical transmembrane segment spans residues 915–935 (VACPIFAGLLHYFFLAAFSWL). The Cytoplasmic segment spans residues 936–958 (CLEGVHLYLLLVEVFESEYSRTK). Residues 959–979 (YYYLGGYCFPALVVGIAAAID) form a helical membrane-spanning segment. Over 980-996 (YRSYGTEKACWLRVDNY) the chain is Extracellular. A helical membrane pass occupies residues 997 to 1017 (FIWSFIGPVSFVIVVNLVFLM). The Cytoplasmic portion of the chain corresponds to 1018-1044 (VTLHKMIRSSSVLKPDSSRLDNIKSWA). A helical transmembrane segment spans residues 1045–1065 (LGAIALLFLLGLTWAFGLLFI). Residues 1066–1069 (NKES) are Extracellular-facing. Residues 1070 to 1090 (VVMAYLFTTFNAFQGVFIFVF) traverse the membrane as a helical segment. Residues 1091–1466 (HCALQKKVHK…DGQMQLVTSL (376 aa)) are Cytoplasmic-facing. At arginine 1188 the chain carries Omega-N-methylarginine. Serine 1214 bears the Phosphoserine mark. Disordered stretches follow at residues 1242–1267 (FNNS…RGRN), 1288–1319 (RGAS…GPGS), 1352–1421 (ESES…SRPP), and 1443–1466 (YLAA…VTSL). The segment covering 1296–1307 (GPPPEPPVPPVP) has biased composition (pro residues). At serine 1319 the chain carries Phosphoserine. The segment covering 1400-1412 (ALPPPPPAPPGPP) has biased composition (pro residues). Serine 1448 and serine 1465 each carry phosphoserine.

The protein belongs to the G-protein coupled receptor 2 family. Adhesion G-protein coupled receptor (ADGR) subfamily. Forms a heterodimer, consisting of a large extracellular region (p120) non-covalently linked to a seven-transmembrane moiety (p85). Interacts with syntaxin and with proteins of the SHANK family via the PDZ domain. Interacts (via extracellular domain) with FLRT1, FLRT2 and FLRT3 (via extracellular domain). In terms of processing, autoproteolytically cleaved into 2 subunits, an extracellular subunit and a seven-transmembrane subunit. This proteolytic processing takes place early in the biosynthetic pathway, either in the endoplasmic reticulum or in the early compartment of the Golgi apparatus.

The protein resides in the cell membrane. It is found in the cell projection. It localises to the axon. Its subcellular location is the growth cone. The protein localises to the synapse. The protein resides in the presynaptic cell membrane. It is found in the synaptosome. Its function is as follows. Calcium-independent receptor of high affinity for alpha-latrotoxin, an excitatory neurotoxin present in black widow spider venom which triggers massive exocytosis from neurons and neuroendocrine cells. Receptor for TENM2 that mediates heterophilic synaptic cell-cell contact and postsynaptic specialization. Receptor probably implicated in the regulation of exocytosis. The chain is Adhesion G protein-coupled receptor L1 from Mus musculus (Mouse).